We begin with the raw amino-acid sequence, 769 residues long: Calcium up-regulated protein F (769 aa).

The disordered stretch occupies residues 1 to 21; that stretch reads MINIKDISKSSNQSEEKSLKG. 2 Ricin B-type lectin domains span residues 25-145 and 116-249; these read KTKY…WTTF and QGNG…WGIN.

This sequence belongs to the cup family.

It localises to the cytoplasm. The protein localises to the membrane. May play an important role in stabilizing and/or regulating the cell membrane during Ca(2+) stress or certain stages of development. This chain is Calcium up-regulated protein F (cupF), found in Dictyostelium discoideum (Social amoeba).